The sequence spans 106 residues: Large ribosomal subunit protein bL21 (106 aa).

Belongs to the bacterial ribosomal protein bL21 family. Part of the 50S ribosomal subunit. Contacts protein L20.

This protein binds to 23S rRNA in the presence of protein L20. In Xanthomonas euvesicatoria pv. vesicatoria (strain 85-10) (Xanthomonas campestris pv. vesicatoria), this protein is Large ribosomal subunit protein bL21.